Reading from the N-terminus, the 440-residue chain is Argininosuccinate lyase (440 aa).

The protein belongs to the lyase 1 family. Argininosuccinate lyase subfamily.

It is found in the cytoplasm. The catalysed reaction is 2-(N(omega)-L-arginino)succinate = fumarate + L-arginine. It functions in the pathway amino-acid biosynthesis; L-arginine biosynthesis; L-arginine from L-ornithine and carbamoyl phosphate: step 3/3. In Clostridium botulinum (strain Okra / Type B1), this protein is Argininosuccinate lyase.